Consider the following 248-residue polypeptide: Probable septum site-determining protein MinC (248 aa).

The interval P115–M144 is disordered. Residues V118 to R138 show a composition bias toward pro residues.

Belongs to the MinC family. As to quaternary structure, interacts with MinD and FtsZ.

Its function is as follows. Cell division inhibitor that blocks the formation of polar Z ring septums. Rapidly oscillates between the poles of the cell to destabilize FtsZ filaments that have formed before they mature into polar Z rings. Prevents FtsZ polymerization. The polypeptide is Probable septum site-determining protein MinC (Xanthomonas euvesicatoria pv. vesicatoria (strain 85-10) (Xanthomonas campestris pv. vesicatoria)).